The sequence spans 301 residues: GTPase Era (301 aa).

The 170-residue stretch at 4–173 (KAGFVALIGK…LECISQHLSP (170 aa)) folds into the Era-type G domain. The tract at residues 12 to 19 (GKPNAGKS) is G1. Residue 12-19 (GKPNAGKS) participates in GTP binding. Residues 38-42 (NATRK) are G2. The interval 64–67 (DTPG) is G3. Residues 64–68 (DTPGL) and 122–125 (SKID) contribute to the GTP site. The interval 122-125 (SKID) is G4. A G5 region spans residues 152-154 (LSA). One can recognise a KH type-2 domain in the interval 204-280 (LSDEIPYESD…FLNLQVIAQK (77 aa)).

The protein belongs to the TRAFAC class TrmE-Era-EngA-EngB-Septin-like GTPase superfamily. Era GTPase family. As to quaternary structure, monomer.

It localises to the cytoplasm. The protein resides in the cell inner membrane. In terms of biological role, an essential GTPase that binds both GDP and GTP, with rapid nucleotide exchange. Plays a role in 16S rRNA processing and 30S ribosomal subunit biogenesis and possibly also in cell cycle regulation and energy metabolism. In Helicobacter pylori (strain ATCC 700392 / 26695) (Campylobacter pylori), this protein is GTPase Era.